A 268-amino-acid chain; its full sequence is Ribosomal RNA small subunit methyltransferase A (268 aa).

S-adenosyl-L-methionine contacts are provided by Asn16, Leu18, Gly43, Glu64, Asp89, and Asn110.

Belongs to the class I-like SAM-binding methyltransferase superfamily. rRNA adenine N(6)-methyltransferase family. RsmA subfamily.

The protein localises to the cytoplasm. It carries out the reaction adenosine(1518)/adenosine(1519) in 16S rRNA + 4 S-adenosyl-L-methionine = N(6)-dimethyladenosine(1518)/N(6)-dimethyladenosine(1519) in 16S rRNA + 4 S-adenosyl-L-homocysteine + 4 H(+). Specifically dimethylates two adjacent adenosines (A1518 and A1519) in the loop of a conserved hairpin near the 3'-end of 16S rRNA in the 30S particle. May play a critical role in biogenesis of 30S subunits. In Pseudomonas syringae pv. syringae (strain B728a), this protein is Ribosomal RNA small subunit methyltransferase A.